We begin with the raw amino-acid sequence, 132 residues long: Ribosome-binding factor A (132 aa).

Belongs to the RbfA family. Monomer. Binds 30S ribosomal subunits, but not 50S ribosomal subunits or 70S ribosomes.

It localises to the cytoplasm. Its function is as follows. One of several proteins that assist in the late maturation steps of the functional core of the 30S ribosomal subunit. Associates with free 30S ribosomal subunits (but not with 30S subunits that are part of 70S ribosomes or polysomes). Required for efficient processing of 16S rRNA. May interact with the 5'-terminal helix region of 16S rRNA. The chain is Ribosome-binding factor A from Pasteurella multocida (strain Pm70).